Reading from the N-terminus, the 46-residue chain is uncharacterized protein (46 aa).

This is an uncharacterized protein from Acidianus sp. F28 (AFV-2).